A 318-amino-acid polypeptide reads, in one-letter code: Aspartate carbamoyltransferase catalytic subunit (318 aa).

2 residues coordinate carbamoyl phosphate: arginine 59 and threonine 60. Lysine 87 serves as a coordination point for L-aspartate. Residues arginine 109, histidine 137, and glutamine 140 each coordinate carbamoyl phosphate. 2 residues coordinate L-aspartate: arginine 170 and arginine 224. Glycine 265 and proline 266 together coordinate carbamoyl phosphate.

This sequence belongs to the aspartate/ornithine carbamoyltransferase superfamily. ATCase family. Heterododecamer (2C3:3R2) of six catalytic PyrB chains organized as two trimers (C3), and six regulatory PyrI chains organized as three dimers (R2).

The enzyme catalyses carbamoyl phosphate + L-aspartate = N-carbamoyl-L-aspartate + phosphate + H(+). It functions in the pathway pyrimidine metabolism; UMP biosynthesis via de novo pathway; (S)-dihydroorotate from bicarbonate: step 2/3. In terms of biological role, catalyzes the condensation of carbamoyl phosphate and aspartate to form carbamoyl aspartate and inorganic phosphate, the committed step in the de novo pyrimidine nucleotide biosynthesis pathway. This is Aspartate carbamoyltransferase catalytic subunit from Allorhizobium ampelinum (strain ATCC BAA-846 / DSM 112012 / S4) (Agrobacterium vitis (strain S4)).